Here is a 328-residue protein sequence, read N- to C-terminus: MSAAGLLAPAPAQAGAPPAPEYYPEEDEELESAEEDERSCRGRESDEDTEDASETDLAKHDEEDYVEMKEQMYQDKLASLKRQLQQLQEGTLQEYQKRMKKLDQQYKERIRNAELFLQLETEQVERNYIKEKKAAVKEFEDKKVELKENLIAELEEKKKMIENEKLTMELTGDSMEVKPIMTRKLRRRPNDPVPIPDKRRKPAPAQLNYLLTDEQIMEDLRTLNKLKSPKRPASPSSPEHLPATPAESPAQRFEARIEDGKLYYDKRWYHKSQAIYLESKDNQKLSCVISSVGANEIWVRKTSDSTKMRIYLGQLQRGLFVIRRRSAA.

Over residues 1–16 (MSAAGLLAPAPAQAGA) the composition is skewed to low complexity. Positions 1 to 65 (MSAAGLLAPA…DLAKHDEEDY (65 aa)) are disordered. Ser-2 is modified (N-acetylserine). Positions 2 to 170 (SAAGLLAPAP…IENEKLTMEL (169 aa)) are mediates interaction with USP17L2. Composition is skewed to acidic residues over residues 23-37 (YPEE…EEDE) and 45-54 (SDEDTEDASE). Phosphoserine occurs at positions 32 and 45. Thr-49 carries the post-translational modification Phosphothreonine. A Phosphoserine modification is found at Ser-53. Residues 56–65 (DLAKHDEEDY) are compositionally biased toward basic and acidic residues. The stretch at 66–171 (VEMKEQMYQD…ENEKLTMELT (106 aa)) forms a coiled coil. Residues Lys-69, Lys-178, and Lys-201 each participate in a glycyl lysine isopeptide (Lys-Gly) (interchain with G-Cter in SUMO2) cross-link. The interval 188–226 (RPNDPVPIPDKRRKPAPAQLNYLLTDEQIMEDLRTLNKL) is sin3 interaction domain (SID). The tract at residues 226 to 252 (LKSPKRPASPSSPEHLPATPAESPAQR) is disordered. A phosphoserine mark is found at Ser-228, Ser-234, and Ser-237. A Phosphothreonine modification is found at Thr-244.

This sequence belongs to the SDS3 family. In terms of assembly, interacts with HCFC1. Homodimer. Component of the SIN3 histone deacetylase (HDAC) corepressor complex. Interacts with SIN3A. Interaction with SIN3B enhances the interaction between SIN3B and HDAC1 to form a complex. Component of a mSin3A corepressor complex that contains SIN3A, SAP130, SUDS3/SAP45, ARID4B/SAP180, HDAC1 and HDAC2. Interacts with USP17L2; the interaction is direct. Interacts with FOXK2. In terms of processing, polyubiquitinated. 'Lys-63'-polyubiquitinated SUDS3 positively regulates histone deacetylation. Regulated through deubiquitination by USP17L2/USP17 that cleaves 'Lys-63'-linked ubiquitin chains.

Its subcellular location is the nucleus. Its function is as follows. Regulatory protein which represses transcription and augments histone deacetylase activity of HDAC1. May have a potential role in tumor suppressor pathways through regulation of apoptosis. May function in the assembly and/or enzymatic activity of the mSin3A corepressor complex or in mediating interactions between the complex and other regulatory complexes. The chain is Sin3 histone deacetylase corepressor complex component SDS3 (SUDS3) from Pongo abelii (Sumatran orangutan).